We begin with the raw amino-acid sequence, 439 residues long: L-tryptophan decarboxylase (439 aa).

This sequence belongs to the phosphatidylserine decarboxylase family.

It catalyses the reaction L-tryptophan + H(+) = tryptamine + CO2. It participates in secondary metabolite biosynthesis. Its function is as follows. L-tryptophan decarboxylase; part of the gene cluster that mediates the biosynthesis of psilocybin, a psychotropic tryptamine-derived natural product. The first step in the pathway is the decarboxylation of L-tryptophan to tryptamine by the decarboxylase psiD. PsiD does not decarboxylate phenylalanine, tyrosine, or 5-hydroxy- L -tryptophan (5-HTP). 4-hydroxy-L-tryptophan is accepted as substrate by psiD as well. The cytochrome P450 monooxygenase psiH then converts tryptamine to 4-hydroxytryptamine. The kinase psiK catalyzes the 4-O-phosphorylation step by converting 4-hydroxytryptamine into norbaeocystin. The methyltransferase psiM then catalyzes iterative methyl transfer to the amino group of norbaeocystin to yield psilocybin via a monomethylated intermediate, baeocystin. 4-hydroxy-6-methyl-l-tryptophancan also be converted the decarboxylase PsiD, kinase PsiK, and methyltransferase PsiM into respectively 6-methyl-norbaeocystin, 6-methylbaeocystin, and 6-methylpsilocybin. The polypeptide is L-tryptophan decarboxylase (Psilocybe cyanescens).